We begin with the raw amino-acid sequence, 276 residues long: MIGKKSFQTNVYRMSKFDTYIFNNLYINDYKMFWIDSGIAKLIDKNCLVSYEINSSSIILLKKNSIQRFSLTSLSDENINVSVITISDSFIRSLKSYILGDLMIRNLYSENKDLLLWNCEHNDIAVLSEVVNGFREINYSDEFLKVFFSGFFSKVEKKYNSIFITDDLDAMEKISCLVKSDITRNWRWADICGELRTNRMILKKELESRGVKFRELINSIRISYSISLMKTGEFKIKQIAYQSGFASVSYFSTVFKSTMNVAPSEYLFMLTGVAEK.

The region spanning 172-269 is the HTH araC/xylS-type domain; sequence EKISCLVKSD…NVAPSEYLFM (98 aa). DNA-binding regions (H-T-H motif) lie at residues 189–210 and 236–259; these read ADICGELRTNRMILKKELESRG and IKQIAYQSGFASVSYFSTVFKSTM.

Its subcellular location is the cytoplasm. In terms of biological role, probable regulatory protein for the tcp operon. This is TCP pilus virulence regulatory protein (tcpN) from Vibrio cholerae serotype O1 (strain ATCC 39541 / Classical Ogawa 395 / O395).